A 550-amino-acid chain; its full sequence is Carnitine transporter (550 aa).

12 consecutive transmembrane segments (helical) span residues 15-35, 53-73, 92-112, 137-157, 196-216, 230-250, 263-283, 317-337, 347-367, 401-421, 451-471, and 477-497; these read FLAVTSLLFVFISVAGLAIYS, FTTPVLLFAFLAIIFTFGLAF, SWIFMFILSGIGSSTLYWGFL, VAYSFFHSGLSAWAIYALASI, MFLLCMFGALTISLVLTAVTF, FMTKVIIILAVSVLFALSSYV, VCLGVVLFAIYVLCFGPTQFI, WTVFYWLWWISYAPGVALFVT, EVIFAMVIGGSVGLWFIFGVF, LLPAGKLMMWIFLGIMVVFLA, LFWCVMLTLVPIAMIFSKAPL, and ATIVTALPFIVIILIQTYGLV.

This sequence belongs to the BCCT transporter (TC 2.A.15) family.

It localises to the cell inner membrane. Its activity is regulated as follows. Inhibited by the protonophore 3,3',4',5-tetrachlorosalicylanilide (TCS). Not activated by osmolarity. Its function is as follows. Catalyzes the energy-dependent uptake of carnitine and is essential for growth on carnitine. Can also mediate the uptake of choline. Is probably a proton:substrate symporter. This chain is Carnitine transporter, found in Acinetobacter baumannii (strain ATCC 19606 / DSM 30007 / JCM 6841 / CCUG 19606 / CIP 70.34 / NBRC 109757 / NCIMB 12457 / NCTC 12156 / 81).